Here is an 828-residue protein sequence, read N- to C-terminus: Periplasmic nitrate reductase (828 aa).

The segment at residues 1 to 31 is a signal peptide (tat-type signal); sequence MKLSRRSFMKANAVAAAAAAAGLSVPGVARA. Positions 39 to 95 constitute a 4Fe-4S Mo/W bis-MGD-type domain; the sequence is IKWDKAPCRFCGTGCGVLVGTQQGRVVACQGDPDAPVNRGLNCIKGYFLPKIMYGKD. Residues C46, C49, C53, and C81 each contribute to the [4Fe-4S] cluster site. Mo-bis(molybdopterin guanine dinucleotide)-binding positions include K83, Q150, N175, C179, 212–219, 243–247, 262–264, M372, Q376, N482, 508–509, K531, D558, and 718–727; these read WGSNMAEM, STYQH, QSD, SD, and TGRVLEHWHT. F794 is a substrate binding site. Residues N802 and K819 each contribute to the Mo-bis(molybdopterin guanine dinucleotide) site.

Belongs to the prokaryotic molybdopterin-containing oxidoreductase family. NasA/NapA/NarB subfamily. In terms of assembly, component of the periplasmic nitrate reductase NapAB complex composed of NapA and NapB. [4Fe-4S] cluster serves as cofactor. The cofactor is Mo-bis(molybdopterin guanine dinucleotide). Predicted to be exported by the Tat system. The position of the signal peptide cleavage has not been experimentally proven.

Its subcellular location is the periplasm. It catalyses the reaction 2 Fe(II)-[cytochrome] + nitrate + 2 H(+) = 2 Fe(III)-[cytochrome] + nitrite + H2O. In terms of biological role, catalytic subunit of the periplasmic nitrate reductase complex NapAB. Receives electrons from NapB and catalyzes the reduction of nitrate to nitrite. This is Periplasmic nitrate reductase from Escherichia coli O1:K1 / APEC.